A 603-amino-acid polypeptide reads, in one-letter code: DNA mismatch repair protein MutL (603 aa).

The disordered stretch occupies residues 361–383 (KETPTLFSKPTIPEYVPSDEDAP).

This sequence belongs to the DNA mismatch repair MutL/HexB family.

Its function is as follows. This protein is involved in the repair of mismatches in DNA. It is required for dam-dependent methyl-directed DNA mismatch repair. May act as a 'molecular matchmaker', a protein that promotes the formation of a stable complex between two or more DNA-binding proteins in an ATP-dependent manner without itself being part of a final effector complex. The sequence is that of DNA mismatch repair protein MutL from Listeria monocytogenes serotype 4b (strain CLIP80459).